Consider the following 349-residue polypeptide: MQRIETRKVKVGSVYVGGDSRVTVQSMTNTDTRDSKKTIEQIKKLEIAGCDIVRCAVPDFDAASSLSEITKNVKLPVVADIHFDYRLALEAIKNGVSALRINPGNIGSKERVELVAKSAKEKNIPIRIGVNSGSLEKDILNKYKRVCSEALVESALNHVKILEDVNFNDIVISIKSSNVQMMIDSYRLISKEVNYPLHLGVTEAGTIWRGTIKSSIGIGTLLSEGIGDTIRVSLTGDPVEEVKVGREILKTFGYLKSGVEFISCPTCGRTSIDLIKIANEVEKRLEKTNKSIKVAVMGCVVNGPGEAREADIGIAGGKGEGLIFKKGEIIKKVKEENLVDELMREIDNM.

Residues C264, C267, C299, and E306 each contribute to the [4Fe-4S] cluster site.

Belongs to the IspG family. [4Fe-4S] cluster is required as a cofactor.

The catalysed reaction is (2E)-4-hydroxy-3-methylbut-2-enyl diphosphate + oxidized [flavodoxin] + H2O + 2 H(+) = 2-C-methyl-D-erythritol 2,4-cyclic diphosphate + reduced [flavodoxin]. The protein operates within isoprenoid biosynthesis; isopentenyl diphosphate biosynthesis via DXP pathway; isopentenyl diphosphate from 1-deoxy-D-xylulose 5-phosphate: step 5/6. Functionally, converts 2C-methyl-D-erythritol 2,4-cyclodiphosphate (ME-2,4cPP) into 1-hydroxy-2-methyl-2-(E)-butenyl 4-diphosphate. The polypeptide is 4-hydroxy-3-methylbut-2-en-1-yl diphosphate synthase (flavodoxin) (Clostridium acetobutylicum (strain ATCC 824 / DSM 792 / JCM 1419 / IAM 19013 / LMG 5710 / NBRC 13948 / NRRL B-527 / VKM B-1787 / 2291 / W)).